A 285-amino-acid chain; its full sequence is uncharacterized protein (285 aa).

The next 7 helical transmembrane spans lie at 6-26 (YLVV…TPLI), 38-58 (VFAA…YIFP), 84-104 (IFLL…IFLR), 110-130 (GVLA…ELIF), 153-173 (FMMH…DDGF), 176-196 (ISFF…ALMV), and 236-256 (LIFG…TVLV).

The protein resides in the cell membrane. This is an uncharacterized protein from Mycoplasma pneumoniae (strain ATCC 29342 / M129 / Subtype 1) (Mycoplasmoides pneumoniae).